The following is a 296-amino-acid chain: Sulfotransferase 1E1 (296 aa).

Residue 49–54 coordinates 3'-phosphoadenylyl sulfate; that stretch reads KSGTTW. Position 107–109 (107–109) interacts with substrate; sequence KTH. H109 functions as the Proton acceptor in the catalytic mechanism. 3'-phosphoadenylyl sulfate contacts are provided by residues R131, S139, Y194, 228–233, and 258–260; these read TSFQEM and RKG.

It belongs to the sulfotransferase 1 family. In terms of assembly, homodimer. In terms of processing, the N-terminus is blocked. As to expression, adrenal gland and much less in liver. Detectable only during pregnancy in uterine.

It localises to the cytoplasm. The protein localises to the cytosol. It carries out the reaction estrone + 3'-phosphoadenylyl sulfate = estrone 3-sulfate + adenosine 3',5'-bisphosphate + H(+). The enzyme catalyses (24S)-hydroxycholesterol + 3'-phosphoadenylyl sulfate = (24S)-hydroxycholesterol 3-sulfate + adenosine 3',5'-bisphosphate + H(+). It catalyses the reaction 17beta-estradiol + 3'-phosphoadenylyl sulfate = 17beta-estradiol 3-sulfate + adenosine 3',5'-bisphosphate + H(+). The catalysed reaction is 3beta-hydroxyandrost-5-en-17-one + 3'-phosphoadenylyl sulfate = dehydroepiandrosterone 3-sulfate + adenosine 3',5'-bisphosphate + H(+). It carries out the reaction 4-ethylphenol + 3'-phosphoadenylyl sulfate = 4-ethylphenyl sulfate + adenosine 3',5'-bisphosphate + H(+). Inhibited by estradiol. Its function is as follows. Sulfotransferase that utilizes 3'-phospho-5'-adenylyl sulfate (PAPS) as sulfonate donor to catalyze the sulfate conjugation of estradiol and estrone. Is a key enzyme in estrogen homeostasis, the sulfation of estrogens leads to their inactivation. Also sulfates dehydroepiandrosterone (DHEA), pregnenolone, (24S)-hydroxycholesteroland xenobiotic compounds like ethinylestradiol, equalenin, diethyl stilbesterol and 1-naphthol at significantly lower efficiency. Does not sulfonate cortisol, testosterone and dopamine. May play a role in gut microbiota-host metabolic interaction. O-sulfonates 4-ethylphenol (4-EP), a dietary tyrosine-derived metabolite produced by gut bacteria. The product 4-EPS crosses the blood-brain barrier and may negatively regulate oligodendrocyte maturation and myelination, affecting the functional connectivity of different brain regions associated with the limbic system. The protein is Sulfotransferase 1E1 (SULT1E1) of Cavia porcellus (Guinea pig).